The following is a 267-amino-acid chain: Tryptophan synthase alpha chain (267 aa).

Residues E47 and D58 each act as proton acceptor in the active site.

It belongs to the TrpA family. In terms of assembly, tetramer of two alpha and two beta chains.

It carries out the reaction (1S,2R)-1-C-(indol-3-yl)glycerol 3-phosphate + L-serine = D-glyceraldehyde 3-phosphate + L-tryptophan + H2O. The protein operates within amino-acid biosynthesis; L-tryptophan biosynthesis; L-tryptophan from chorismate: step 5/5. Its function is as follows. The alpha subunit is responsible for the aldol cleavage of indoleglycerol phosphate to indole and glyceraldehyde 3-phosphate. The protein is Tryptophan synthase alpha chain of Chlorobium chlorochromatii (strain CaD3).